A 235-amino-acid polypeptide reads, in one-letter code: MAQVDLLNVKGEKVGTLEISDFVFNIDPNYDVMWRYVDMQLSNRRAGTASTKTRGEVSGGGRKPWPQKHTGRARHGSIRSPIWRHGGVVHGPKPRDWSKKLNKKMKKLALRSALSVKYRENKLLVLDDLKLERPKTKSLKEILQNLQLSDKKTLIVLPWKEEGYMNVKLSGRNLPDVKVIIADNPNNSKNGEKAVRIDGLNVFDMLKYDYLVLTRDMVSKIEEVLGNEAGKALTA.

The interval 45–75 (RAGTASTKTRGEVSGGGRKPWPQKHTGRARH) is disordered. Over residues 65–75 (WPQKHTGRARH) the composition is skewed to basic residues.

The protein belongs to the universal ribosomal protein uL4 family. In terms of assembly, part of the 50S ribosomal subunit.

Its function is as follows. One of the primary rRNA binding proteins, this protein initially binds near the 5'-end of the 23S rRNA. It is important during the early stages of 50S assembly. It makes multiple contacts with different domains of the 23S rRNA in the assembled 50S subunit and ribosome. Functionally, this protein only weakly controls expression of the E.coli S10 operon. It is incorporated into E.coli ribosomes, however it is not as firmly associated as the endogenous protein. Forms part of the polypeptide exit tunnel. This chain is Large ribosomal subunit protein uL4 (rplD), found in Thermotoga maritima (strain ATCC 43589 / DSM 3109 / JCM 10099 / NBRC 100826 / MSB8).